Consider the following 609-residue polypeptide: UvrABC system protein C (609 aa).

A GIY-YIG domain is found at 13-91 (HEPGVYRMYD…IKLYQPRYNV (79 aa)). The region spanning 201–236 (QQVLDYLIGKMEQASRNLDFEQAARYRDQIQAVRSV) is the UVR domain.

Belongs to the UvrC family. As to quaternary structure, interacts with UvrB in an incision complex.

It is found in the cytoplasm. In terms of biological role, the UvrABC repair system catalyzes the recognition and processing of DNA lesions. UvrC both incises the 5' and 3' sides of the lesion. The N-terminal half is responsible for the 3' incision and the C-terminal half is responsible for the 5' incision. The chain is UvrABC system protein C from Haemophilus influenzae (strain ATCC 51907 / DSM 11121 / KW20 / Rd).